The following is a 560-amino-acid chain: MSETINTAAQFPSFEKPTVQFNEKGWGPCELPDTFKDVPYQPFSKNDRLGKICDWTNTSNNDKKYQNKYASSFGTGIQYSYYHEEDETTFHLVDTARVQKPPHQRGRFRNMRNSRSGRGRNARGGLNTHGMTTLSGKNVKARDPRHGRGMGKKFGHRGPPPKMRESSVAVRADWASIEEMDFPRLIKLSLPNIKEGVDIVTCGTLEYYDKTYDRINVKNEKPLQKIDRIVHTVTTTDDPVIRRLSKTVGNVFATDAILATIMCSTRSNYSWDIVIEKVGDKVFMDKRDHTEFDLLTVNESSVEPPTDDDSSCNSPRNLAIEATFINHNFSQQVLKTGDQEPKYKFEESNPFISEDEDIQVASVGYRYKKWELGSDIVLVARCEHDGVLQTPSGEPQFMTIKALNEWDSKLANGVEWRQKLDTQRGAVLANELRNNACKLAKWTVQAVLAGSDQLKLGYVSRINPRDHSRHVILGTQQFKPHEFATQINLSMDNAWGILRCIIDLVMKQKDGKYLIMKDPNKPIIRLYDIPDNTFDSDDSDDGEGDDEGFQQVYNYAHNKI.

The interval 98–166 (VQKPPHQRGR…RGPPPKMRES (69 aa)) is disordered. Basic residues predominate over residues 100–121 (KPPHQRGRFRNMRNSRSGRGRN). A Phosphothreonine modification is found at threonine 128. Positions 147 to 156 (GRGMGKKFGH) are enriched in basic residues. The tract at residues 291 to 305 (EFDLLTVNESSVEPP) is RNA gate.

Belongs to the eIF-3 subunit D family. Component of the eukaryotic translation initiation factor 3 (eIF-3) complex. The eIF-3 complex interacts with pix.

The protein localises to the cytoplasm. Its function is as follows. mRNA cap-binding component of the eukaryotic translation initiation factor 3 (eIF-3) complex, which is involved in protein synthesis of a specialized repertoire of mRNAs and, together with other initiation factors, stimulates binding of mRNA and methionyl-tRNAi to the 40S ribosome. The eIF-3 complex specifically targets and initiates translation of a subset of mRNAs involved in cell proliferation. In the eIF-3 complex, eif3d specifically recognizes and binds the 7-methylguanosine cap of a subset of mRNAs. The chain is Eukaryotic translation initiation factor 3 subunit D-1 from Drosophila melanogaster (Fruit fly).